Here is a 481-residue protein sequence, read N- to C-terminus: 3-isopropylmalate dehydratase large subunit (481 aa).

[4Fe-4S] cluster is bound by residues cysteine 363, cysteine 423, and cysteine 426. The segment at 432-459 (DQLKPGERSASTSNRNFEGRQGPGGRTH) is disordered.

Belongs to the aconitase/IPM isomerase family. LeuC type 1 subfamily. Heterodimer of LeuC and LeuD. [4Fe-4S] cluster serves as cofactor.

The catalysed reaction is (2R,3S)-3-isopropylmalate = (2S)-2-isopropylmalate. Its pathway is amino-acid biosynthesis; L-leucine biosynthesis; L-leucine from 3-methyl-2-oxobutanoate: step 2/4. Catalyzes the isomerization between 2-isopropylmalate and 3-isopropylmalate, via the formation of 2-isopropylmaleate. This is 3-isopropylmalate dehydratase large subunit from Corynebacterium glutamicum (strain ATCC 13032 / DSM 20300 / JCM 1318 / BCRC 11384 / CCUG 27702 / LMG 3730 / NBRC 12168 / NCIMB 10025 / NRRL B-2784 / 534).